We begin with the raw amino-acid sequence, 188 residues long: Vascular endothelial growth factor A-A (188 aa).

The first 23 residues, 1–23, serve as a signal peptide directing secretion; the sequence is MNLVVYLIQLFLAALLHLSAVKA. 3 disulfide bridges follow: C49–C91, C80–C125, and C84–C127. N-linked (GlcNAc...) asparagine glycosylation occurs at N98.

The protein belongs to the PDGF/VEGF growth factor family. In terms of assembly, homodimer; disulfide-linked. Isoform VEGF165 binds kdr and kdrl. As to expression, predominantly expressed in regions associated with active vascularization. From 15-16 hours post-fertilization (hpf), expressed in the anterior forebrain, the mesoderm underlying and lateral to the anterior hindbrain, the mesoderm underlying and lateral to the posterior hindbrain, and in the ventral medial portions of the somites. By 30-36 hpf, expression in the somites is decreased, while strong expression is observed in the region of the developing glomeruli and in the anterior portion of the pronephric ducts, the pharyngeal arches, and the brain. By 72 hpf, expression remains only in the pronephros region.

Its subcellular location is the secreted. Functionally, growth factor active in angiogenesis, vasculogenesis and endothelial cell growth. Induces endothelial cell proliferation, promotes cell migration, inhibits apoptosis, and induces permeabilization of blood vessels. Required for intersegmental vessel development in the tail during embryogenesis. Acts both upstream of kdr and tie1 to stimulate endothelial cell differentiation, and upstream of gata1 to stimulate hematopoietic cell differentiation. In Danio rerio (Zebrafish), this protein is Vascular endothelial growth factor A-A (vegfaa).